Here is a 313-residue protein sequence, read N- to C-terminus: Solute carrier family 35 member E3 (313 aa).

Transmembrane regions (helical) follow at residues 14 to 34 (IIAG…INKW), 40 to 60 (GFPN…GLFI), 77 to 97 (ILLL…SLQS), 100 to 122 (IGTY…TMYY), 130 to 146 (IKLT…LNSY), 153 to 173 (LMGM…QVWV), 187 to 207 (LLYY…PFFE), 215 to 235 (IFGP…VIAF), 252 to 272 (TYNM…YVLF), and 275 to 295 (PLSL…LAYT).

The protein belongs to the TPT transporter family. SLC35E subfamily.

Its subcellular location is the membrane. Functionally, putative transporter. The protein is Solute carrier family 35 member E3 (slc35e3) of Danio rerio (Zebrafish).